A 489-amino-acid polypeptide reads, in one-letter code: Protein LMBR1L (489 aa).

Over 1 to 21 (MEAPDYEVLSVREQLFHERIR) the chain is Extracellular. Residues 1–59 (MEAPDYEVLSVREQLFHERIRECIISTLLFATLYILCHIFLTRFKKPAEFTTVDDEDAT) form an interaction with LGB region. The tract at residues 1-76 (MEAPDYEVLS…LCTFTLAIAL (76 aa)) is LCN1-binding. A helical transmembrane segment spans residues 22 to 42 (ECIISTLLFATLYILCHIFLT). Residues 43-66 (RFKKPAEFTTVDDEDATVNKIALE) are Cytoplasmic-facing. The helical transmembrane segment at 67-87 (LCTFTLAIALGAVLLLPFSII) threads the bilayer. Over 88 to 114 (SNEVLLSLPRNYYIQWLNGSLIHGLWN) the chain is Extracellular. The chain crosses the membrane as a helical span at residues 115 to 135 (LVFLFSNLSLIFLMPFAYFFT). Over 136 to 154 (ESEGFAGSRKGVLGRVYET) the chain is Cytoplasmic. The chain crosses the membrane as a helical span at residues 155 to 175 (VVMLMLLTLLVLGMVWVASAI). Topologically, residues 176-196 (VDKNKANRESLYDFWEYYLPY) are extracellular. Residues 197–217 (LYSCISFLGVLLLLVCTPLGL) form a helical membrane-spanning segment. Topologically, residues 218–305 (ARMFSVTGKL…NLGYPLAMLC (88 aa)) are cytoplasmic. A helical transmembrane segment spans residues 306 to 326 (LLVLTGLSVLIVAIHILELLI). The Extracellular portion of the chain corresponds to 327–350 (DEAAMPRGMQGTSLGQVSFSKLGS). Residues 351-371 (FGAVIQVVLIFYLMVSSVVGF) form a helical membrane-spanning segment. Residues 372-388 (YSSPLFRSLRPRWHDTA) lie on the Cytoplasmic side of the membrane. A helical membrane pass occupies residues 389 to 409 (MTQIIGNCVCLLVLSSALPVF). The Extracellular segment spans residues 410 to 431 (SRTLGLTRFDLLGDFGRFNWLG). Residues 432–452 (NFYIVFLYNAAFAGLTTLCLV) form a helical membrane-spanning segment. At 453–489 (KTFTAAVRAELIRAFGLDRLPLPVSGFPQASRKTQHQ) the chain is on the cytoplasmic side.

The protein belongs to the LIMR family. Dimer. Can also form higher oligomers. Interacts with LCN1; this interaction mediates the endocytosis of LCN1. Interacts with UBAC2, FAF2, VCP, AMFR, ZNRF3, CTNNB1, LRP6, GSK3A and GSK3B. Interacts with DVL2 and RNF43. Interaction with SCGB1A1 has been observed in PubMed:16423471, but not in PubMed:23964685. Interaction with LGB which mediates the endocytosis of LGB has been observed in PubMed:17991420, but not in PubMed:23964685. As to expression, expressed in testis, pituitary gland, adrenal gland, trachea, placenta, thymus, cerebellum, stomach, mammary gland, spinal cord. A weaker expression is detected in colon, pancreas, and prostate.

It is found in the cell membrane. The protein localises to the endoplasmic reticulum membrane. Plays an essential role in lymphocyte development by negatively regulating the canonical Wnt signaling pathway. In association with UBAC2 and E3 ubiquitin-protein ligase AMFR, promotes the ubiquitin-mediated degradation of CTNNB1 and Wnt receptors FZD6 and LRP6. LMBR1L stabilizes the beta-catenin destruction complex that is required for regulating CTNNB1 levels. Acts as a LCN1 receptor and can mediate its endocytosis. This chain is Protein LMBR1L (LMBR1L), found in Homo sapiens (Human).